Consider the following 273-residue polypeptide: Ribonuclease Z (273 aa).

Zn(2+) contacts are provided by His-61, His-63, His-146, Asp-169, and His-233.

The protein belongs to the RNase Z family. In terms of assembly, homodimer. Zn(2+) is required as a cofactor.

The enzyme catalyses Endonucleolytic cleavage of RNA, removing extra 3' nucleotides from tRNA precursor, generating 3' termini of tRNAs. A 3'-hydroxy group is left at the tRNA terminus and a 5'-phosphoryl group is left at the trailer molecule.. In terms of biological role, zinc phosphodiesterase, which displays some tRNA 3'-processing endonuclease activity. Probably involved in tRNA maturation, by removing a 3'-trailer from precursor tRNA. This is Ribonuclease Z from Mycobacterium tuberculosis (strain ATCC 25177 / H37Ra).